Reading from the N-terminus, the 1531-residue chain is Probable outer membrane protein PmpD (1531 aa).

The N-terminal stretch at 1-20 (MSSEKDIKSTCSKFSLSVVA) is a signal peptide. The Autotransporter domain occupies 1244–1531 (EFDYSTNVWG…EANTGLRLIF (288 aa)).

Belongs to the PMP outer membrane protein family.

It is found in the secreted. Its subcellular location is the cell wall. The protein resides in the cell outer membrane. The protein is Probable outer membrane protein PmpD (pmpD) of Chlamydia trachomatis serovar D (strain ATCC VR-885 / DSM 19411 / UW-3/Cx).